Consider the following 333-residue polypeptide: DNA-directed RNA polymerase subunit alpha (333 aa).

An alpha N-terminal domain (alpha-NTD) region spans residues 1 to 246; it reads MEKFIKINWT…AHLNIIGDVN (246 aa). The alpha C-terminal domain (alpha-CTD) stretch occupies residues 263 to 333; the sequence is HSKTQNILIQ…YNVFLDKGEE (71 aa).

Belongs to the RNA polymerase alpha chain family. Homodimer. The RNAP catalytic core consists of 2 alpha, 1 beta, 1 beta' and 1 omega subunit. When a sigma factor is associated with the core the holoenzyme is formed, which can initiate transcription.

It catalyses the reaction RNA(n) + a ribonucleoside 5'-triphosphate = RNA(n+1) + diphosphate. In terms of biological role, DNA-dependent RNA polymerase catalyzes the transcription of DNA into RNA using the four ribonucleoside triphosphates as substrates. This chain is DNA-directed RNA polymerase subunit alpha, found in Mycoplasma mobile (strain ATCC 43663 / 163K / NCTC 11711) (Mesomycoplasma mobile).